The following is a 336-amino-acid chain: Ornithine carbamoyltransferase, catabolic (336 aa).

Carbamoyl phosphate-binding positions include 57–60 (STRT), Q84, R108, and 135–138 (HPTQ). Residues N168, D232, and 236–237 (SM) contribute to the L-ornithine site. Residues 274–275 (CL) and R321 each bind carbamoyl phosphate.

The protein belongs to the aspartate/ornithine carbamoyltransferase superfamily. OTCase family.

The protein resides in the cytoplasm. It carries out the reaction carbamoyl phosphate + L-ornithine = L-citrulline + phosphate + H(+). Its pathway is amino-acid degradation; L-arginine degradation via ADI pathway; carbamoyl phosphate from L-arginine: step 2/2. Functionally, reversibly catalyzes the transfer of the carbamoyl group from carbamoyl phosphate (CP) to the N(epsilon) atom of ornithine (ORN) to produce L-citrulline. In Burkholderia pseudomallei (strain K96243), this protein is Ornithine carbamoyltransferase, catabolic.